A 142-amino-acid chain; its full sequence is Large ribosomal subunit protein uL11 (142 aa).

Belongs to the universal ribosomal protein uL11 family. As to quaternary structure, part of the ribosomal stalk of the 50S ribosomal subunit. Interacts with L10 and the large rRNA to form the base of the stalk. L10 forms an elongated spine to which L12 dimers bind in a sequential fashion forming a multimeric L10(L12)X complex. In terms of processing, one or more lysine residues are methylated.

Its function is as follows. Forms part of the ribosomal stalk which helps the ribosome interact with GTP-bound translation factors. This Citrobacter koseri (strain ATCC BAA-895 / CDC 4225-83 / SGSC4696) protein is Large ribosomal subunit protein uL11.